Consider the following 372-residue polypeptide: Queuine tRNA-ribosyltransferase (372 aa).

Asp89 (proton acceptor) is an active-site residue. Residues Asp89–Phe93, Asp161, and Gly232 each bind substrate. The interval Gly262–Ser268 is RNA binding. The Nucleophile role is filled by Asp281. Residues Thr286–Arg290 are RNA binding; important for wobble base 34 recognition. Zn(2+)-binding residues include Cys319, Cys321, Cys324, and His351.

The protein belongs to the queuine tRNA-ribosyltransferase family. As to quaternary structure, homodimer. Within each dimer, one monomer is responsible for RNA recognition and catalysis, while the other monomer binds to the replacement base PreQ1. It depends on Zn(2+) as a cofactor.

The enzyme catalyses 7-aminomethyl-7-carbaguanine + guanosine(34) in tRNA = 7-aminomethyl-7-carbaguanosine(34) in tRNA + guanine. It functions in the pathway tRNA modification; tRNA-queuosine biosynthesis. Catalyzes the base-exchange of a guanine (G) residue with the queuine precursor 7-aminomethyl-7-deazaguanine (PreQ1) at position 34 (anticodon wobble position) in tRNAs with GU(N) anticodons (tRNA-Asp, -Asn, -His and -Tyr). Catalysis occurs through a double-displacement mechanism. The nucleophile active site attacks the C1' of nucleotide 34 to detach the guanine base from the RNA, forming a covalent enzyme-RNA intermediate. The proton acceptor active site deprotonates the incoming PreQ1, allowing a nucleophilic attack on the C1' of the ribose to form the product. After dissociation, two additional enzymatic reactions on the tRNA convert PreQ1 to queuine (Q), resulting in the hypermodified nucleoside queuosine (7-(((4,5-cis-dihydroxy-2-cyclopenten-1-yl)amino)methyl)-7-deazaguanosine). The protein is Queuine tRNA-ribosyltransferase of Chlamydia felis (strain Fe/C-56) (Chlamydophila felis).